A 253-amino-acid chain; its full sequence is Zinc import ATP-binding protein ZnuC (253 aa).

Positions 6–227 (VTLNKISVTF…FGNRGAEQLA (222 aa)) constitute an ABC transporter domain. Position 38–45 (38–45 (GPNGAGKS)) interacts with ATP.

Belongs to the ABC transporter superfamily. Zinc importer (TC 3.A.1.15.5) family. In terms of assembly, the complex is composed of two ATP-binding proteins (ZnuC), two transmembrane proteins (ZnuB) and a solute-binding protein (ZnuA).

The protein resides in the cell inner membrane. It catalyses the reaction Zn(2+)(out) + ATP(in) + H2O(in) = Zn(2+)(in) + ADP(in) + phosphate(in) + H(+)(in). Part of the ABC transporter complex ZnuABC involved in zinc import. Responsible for energy coupling to the transport system. This chain is Zinc import ATP-binding protein ZnuC, found in Yersinia pseudotuberculosis serotype I (strain IP32953).